A 342-amino-acid chain; its full sequence is Anthranilate phosphoribosyltransferase (342 aa).

5-phospho-alpha-D-ribose 1-diphosphate-binding positions include Gly-81, 84–85, 91–94, 109–117, and Ser-121; these read GD, NVSS, and KHGNRGVSS. An anthranilate-binding site is contributed by Gly-81. Ser-93 provides a ligand contact to Mg(2+). Residue Asn-112 coordinates anthranilate. Arg-167 provides a ligand contact to anthranilate. 2 residues coordinate Mg(2+): Asp-226 and Glu-227.

It belongs to the anthranilate phosphoribosyltransferase family. Homodimer. Requires Mg(2+) as cofactor.

The enzyme catalyses N-(5-phospho-beta-D-ribosyl)anthranilate + diphosphate = 5-phospho-alpha-D-ribose 1-diphosphate + anthranilate. The protein operates within amino-acid biosynthesis; L-tryptophan biosynthesis; L-tryptophan from chorismate: step 2/5. In terms of biological role, catalyzes the transfer of the phosphoribosyl group of 5-phosphorylribose-1-pyrophosphate (PRPP) to anthranilate to yield N-(5'-phosphoribosyl)-anthranilate (PRA). The chain is Anthranilate phosphoribosyltransferase from Marinobacter nauticus (strain ATCC 700491 / DSM 11845 / VT8) (Marinobacter aquaeolei).